Here is a 290-residue protein sequence, read N- to C-terminus: Protein male abnormal 3 (290 aa).

DNA-binding regions (DM) lie at residues 28–74 and 94–142; these read CQRC…SKKK and CARC…KLRR. Disordered regions lie at residues 139–167 and 179–202; these read KLRR…MDME and IIGT…LSMS. Over residues 146–155 the composition is skewed to basic and acidic residues; the sequence is KSRDGKEPKR. Low complexity predominate over residues 182 to 202; the sequence is TSASPSPSSTTDTMSPSLSMS.

Expression is undetectable in hermaphrodites, but persists in males. In males, expressed in cells of the tail tip.

Its subcellular location is the nucleus. Transcription factor which binds the DNA motif 5'-[CGA][TCA][TA]ACAATGT[AT][TGA]C-3', probably as a monomer. Acts partially redundantly with the transcription factor dmd-3 to coordinate tail tip cell fusion and retraction and thereby regulate male tail tip morphogenesis. Promotes male-specific development of two tissues, the peripheral nervous system and the intestine. In the peripheral nervous system, directs differentiation of sensory ray neuroblasts into peripheral sense organs. In the intestine, causes repression of vitellogenin gene transcription. In Caenorhabditis elegans, this protein is Protein male abnormal 3.